A 188-amino-acid polypeptide reads, in one-letter code: Ion-translocating oxidoreductase complex subunit G (188 aa).

Residues 1–9 (MSDSKEITK) lie on the Cytoplasmic side of the membrane. The chain crosses the membrane as a helical span at residues 10–30 (VIVTMVVISAVAAALLALTYT). The Extracellular segment spans residues 31–188 (PTQAQLKLLQ…AVDYVSAQEG (158 aa)). FMN phosphoryl threonine is present on T166.

The protein belongs to the RnfG family. The Rnf complex is probably composed of eight subunits, including RnfA, RnfB, RnfC, RnfD, RnfE and RnfG. FMN serves as cofactor.

The protein localises to the cell membrane. Its function is as follows. Part of a membrane-bound complex that couples electron transfer with translocation of ions across the membrane. Catalyzes Na(+) transport, most probably coupled to electron transfer from reduced ferredoxin to methanophenazine and heterodisulfide reductase. Involved in heterodisulfide reduction during methanogenesis from acetate. The sequence is that of Ion-translocating oxidoreductase complex subunit G from Methanosarcina acetivorans (strain ATCC 35395 / DSM 2834 / JCM 12185 / C2A).